The sequence spans 230 residues: Heptaprenylglyceryl phosphate synthase (230 aa).

Lysine 12 contributes to the sn-glycerol 1-phosphate binding site. Mg(2+)-binding residues include aspartate 14 and threonine 40. Residues 159–164, glycine 189, and 209–210 each bind sn-glycerol 1-phosphate; these read YIEYSG and GD.

The protein belongs to the GGGP/HepGP synthase family. Group I subfamily. Homodimer. Mg(2+) is required as a cofactor.

It carries out the reaction sn-glycerol 1-phosphate + all-trans-heptaprenyl diphosphate = 3-heptaprenyl-sn-glycero-1-phosphate + diphosphate. The protein operates within membrane lipid metabolism; glycerophospholipid metabolism. Functionally, prenyltransferase that catalyzes in vivo the transfer of the heptaprenyl moiety of heptaprenyl pyrophosphate (HepPP; 35 carbon atoms) to the C3 hydroxyl of sn-glycerol-1-phosphate (G1P), producing heptaprenylglyceryl phosphate (HepGP). This reaction is an ether-bond-formation step in the biosynthesis of archaea-type G1P-based membrane lipids found in Bacillales. To a much lesser extent, is also able to use geranylgeranyl diphosphate (GGPP; C20) as the prenyl donor. This chain is Heptaprenylglyceryl phosphate synthase, found in Staphylococcus aureus (strain NCTC 8325 / PS 47).